The following is an 898-amino-acid chain: Sodium/hydrogen exchanger 5 (898 aa).

At 1–48 the chain is on the cytoplasmic side; that stretch reads MLSAALLLLPGLPLAGAGATEEPTQESGPLGEPPPGLALFRWQWHEVE. Residues 49–69 form a helical membrane-spanning segment; the sequence is APYLVALWILVASLAKIVFHL. Over 70-76 the chain is Extracellular; that stretch reads SRKVTSL. Residues 77 to 97 form a helical membrane-spanning segment; it reads VPESCLLILLGLVLGGIVLAV. Residues 98–106 lie on the Cytoplasmic side of the membrane; that stretch reads AKKAEYQLE. A helical transmembrane segment spans residues 107 to 127; the sequence is PGTFFLFLLPPIVLDSGYFMP. The Extracellular segment spans residues 128 to 137; the sequence is SRLFFDNLGA. Residues 138–158 form a helical membrane-spanning segment; it reads ILTYAVVGTLWNAFTTGVALW. Topologically, residues 159-176 are cytoplasmic; the sequence is GLQQAGLVAPRVQAGLLD. The chain crosses the membrane as a helical span at residues 177 to 197; the sequence is FLLFGSLISAVDPVAVLAVFE. Topologically, residues 198-203 are extracellular; it reads EVHVNQ. A helical membrane pass occupies residues 204–224; it reads TLFIIIFGESLLNDAVTVVLY. Over 225 to 249 the chain is Cytoplasmic; that stretch reads KVCNSFVEMGSANVQATDYLKGVAS. The helical transmembrane segment at 250 to 270 threads the bilayer; sequence LFVVSLGGAAVGLVFAFLLAL. Over 271-279 the chain is Extracellular; the sequence is TTRFTKRVR. A helical membrane pass occupies residues 280 to 300; it reads IIEPLLVFLLAYAAYLTAEMA. Residues 301 to 334 lie on the Cytoplasmic side of the membrane; that stretch reads SLSAILAVTMCGLGCKKYVEANISHKSRTAVKYT. A helical membrane pass occupies residues 335–355; it reads MKTLASCAETVIFMLLGISAV. At 356–363 the chain is on the extracellular side; that stretch reads DSSKWAWD. The helical transmembrane segment at 364–384 threads the bilayer; sequence SGLVLGTLFFILFFRALGVVL. The Cytoplasmic portion of the chain corresponds to 385-401; that stretch reads QTWALNQFRLVPLDKID. The chain crosses the membrane as a helical span at residues 402 to 422; that stretch reads QVVMSYGGLRGAVAFALVILL. Residues 423–431 are Extracellular-facing; the sequence is DRTKVPAKD. Residues 432 to 452 traverse the membrane as a helical segment; sequence YFVATTIVVVFFTVIVQGLTI. Residues 453–898 are Cytoplasmic-facing; the sequence is KPLVKWLRVK…CIQFNRGGRL (446 aa). Disordered regions lie at residues 660–693 and 826–866; these read FTKS…RDLG and EEPQ…PQQE. The segment covering 663–675 has biased composition (basic residues); that stretch reads SKPRPRKTSHKKK. Polar residues predominate over residues 857-866; that stretch reads ESSADIPQQE.

It belongs to the monovalent cation:proton antiporter 1 (CPA1) transporter (TC 2.A.36) family. In terms of assembly, interacts with CHP1 and CHP2. Interacts with ARRB2; facilitates the endocytosis of SLC9A5 from the plasma membrane. Interacts with RACK1; this interaction positively regulates SLC9A5 activity and promote SLC9A5 localization to focal adhesions. Interacts with SCAMP2; this interaction regulates SLC9A5 cell-surface targeting and SLC9A5 activity. Post-translationally, phosphorylated by PRKAA2; promotes its accumulation at the cell surface. Phosphorylated by CSNK2A1 in a manner favoring its beta-arrestin binding and endocytosis. As to expression, highest expression level is detected in brain. Expressed in hippocampal neurons (at protein level).

The protein localises to the cell membrane. It is found in the recycling endosome membrane. Its subcellular location is the cell projection. The protein resides in the dendritic spine membrane. It localises to the synaptic cell membrane. The protein localises to the cell junction. It is found in the focal adhesion. It carries out the reaction Na(+)(in) + H(+)(out) = Na(+)(out) + H(+)(in). Functionally, plasma membrane Na(+)/H(+) antiporter. Mediates the electroneutral exchange of intracellular H(+) ions for extracellular Na(+) in 1:1 stoichiometry. Responsible for regulating intracellular pH homeostasis, in particular in neural tissues. Acts as a negative regulator of dendritic spine growth. Plays a role in postsynaptic remodeling and signaling. Can also contribute to organellar pH regulation, with consequences for receptor tyrosine kinase trafficking. This chain is Sodium/hydrogen exchanger 5 (Slc9a5), found in Mus musculus (Mouse).